The chain runs to 450 residues: Glucose-6-phosphate isomerase (450 aa).

The active-site Proton donor is glutamate 291. Catalysis depends on residues histidine 312 and lysine 426.

It belongs to the GPI family.

The protein localises to the cytoplasm. The catalysed reaction is alpha-D-glucose 6-phosphate = beta-D-fructose 6-phosphate. Its pathway is carbohydrate biosynthesis; gluconeogenesis. It functions in the pathway carbohydrate degradation; glycolysis; D-glyceraldehyde 3-phosphate and glycerone phosphate from D-glucose: step 2/4. Its function is as follows. Catalyzes the reversible isomerization of glucose-6-phosphate to fructose-6-phosphate. The chain is Glucose-6-phosphate isomerase from Clostridium botulinum (strain Loch Maree / Type A3).